The chain runs to 299 residues: GTPase Era (299 aa).

One can recognise an Era-type G domain in the interval 5–175; that stretch reads RSGFVCFVGR…TDVLAGKLPP (171 aa). The segment at 13-20 is G1; sequence GRPNTGKS. GTP is bound at residue 13–20; sequence GRPNTGKS. The G2 stretch occupies residues 39–43; the sequence is QTTRH. The tract at residues 60-63 is G3; sequence DTPG. GTP contacts are provided by residues 60-64 and 124-127; these read DTPGL and TKID. The segment at 124–127 is G4; sequence TKID. Positions 154-156 are G5; the sequence is VSA. Residues 206-285 form the KH type-2 domain; that stretch reads VRDELPHSLA…YLDLRVKIAK (80 aa).

This sequence belongs to the TRAFAC class TrmE-Era-EngA-EngB-Septin-like GTPase superfamily. Era GTPase family. As to quaternary structure, monomer.

Its subcellular location is the cell envelope. The protein resides in the secreted. It localises to the cell wall. In terms of biological role, exhibits GTPase activity. Binds RNA but is probably not involved in ribosome assembly in mycobacteria. This chain is GTPase Era, found in Mycobacterium sp. (strain KMS).